The sequence spans 480 residues: Cytochrome b-c1 complex subunit 1, mitochondrial (480 aa).

Residues 1 to 34 constitute a mitochondrion transit peptide; it reads MAASVVCRAATAGAQVLLRARRSPALLRTPALRS. N6-acetyllysine occurs at positions 111 and 138. N6-acetyllysine; alternate is present on Lys-163. At Lys-163 the chain carries N6-succinyllysine; alternate. Ser-212 carries the post-translational modification Phosphoserine. Lys-248 carries the N6-acetyllysine modification.

This sequence belongs to the peptidase M16 family. UQCRC1/QCR1 subfamily. As to quaternary structure, component of the ubiquinol-cytochrome c oxidoreductase (cytochrome b-c1 complex, complex III, CIII), a multisubunit enzyme composed of 11 subunits. The complex is composed of 3 respiratory subunits cytochrome b, cytochrome c1 and Rieske protein UQCRFS1, 2 core protein subunits UQCRC1/QCR1 and UQCRC2/QCR2, and 6 low-molecular weight protein subunits UQCRH/QCR6, UQCRB/QCR7, UQCRQ/QCR8, UQCR10/QCR9, UQCR11/QCR10 and subunit 9, the cleavage product of Rieske protein UQCRFS1. The complex exists as an obligatory dimer and forms supercomplexes (SCs) in the inner mitochondrial membrane with NADH-ubiquinone oxidoreductase (complex I, CI) and cytochrome c oxidase (complex IV, CIV), resulting in different assemblies (supercomplex SCI(1)III(2)IV(1) and megacomplex MCI(2)III(2)IV(2)). Interacts with UQCC6. Interacts with STMP1. As to expression, expressed in brain, including substantia nigra, striatum, cortex and cerebellum, and in spinal cord, heart, kidney, liver and muscle.

The protein localises to the mitochondrion inner membrane. Its function is as follows. Component of the ubiquinol-cytochrome c oxidoreductase, a multisubunit transmembrane complex that is part of the mitochondrial electron transport chain which drives oxidative phosphorylation. The respiratory chain contains 3 multisubunit complexes succinate dehydrogenase (complex II, CII), ubiquinol-cytochrome c oxidoreductase (cytochrome b-c1 complex, complex III, CIII) and cytochrome c oxidase (complex IV, CIV), that cooperate to transfer electrons derived from NADH and succinate to molecular oxygen, creating an electrochemical gradient over the inner membrane that drives transmembrane transport and the ATP synthase. The cytochrome b-c1 complex catalyzes electron transfer from ubiquinol to cytochrome c, linking this redox reaction to translocation of protons across the mitochondrial inner membrane, with protons being carried across the membrane as hydrogens on the quinol. In the process called Q cycle, 2 protons are consumed from the matrix, 4 protons are released into the intermembrane space and 2 electrons are passed to cytochrome c. The 2 core subunits UQCRC1/QCR1 and UQCRC2/QCR2 are homologous to the 2 mitochondrial-processing peptidase (MPP) subunits beta-MPP and alpha-MPP respectively, and they seem to have preserved their MPP processing properties. May be involved in the in situ processing of UQCRFS1 into the mature Rieske protein and its mitochondrial targeting sequence (MTS)/subunit 9 when incorporated into complex III. Seems to play an important role in the maintenance of proper mitochondrial function in nigral dopaminergic neurons. This Homo sapiens (Human) protein is Cytochrome b-c1 complex subunit 1, mitochondrial (UQCRC1).